We begin with the raw amino-acid sequence, 260 residues long: Acyl-coenzyme A diphosphatase FITM2 (260 aa).

The Cytoplasmic portion of the chain corresponds to 1-23; it reads MERLENCAQMFQRKFLNEAFRRH. A helical membrane pass occupies residues 24-44; the sequence is CPVLLACIALGGSLLKELSPL. Over 45-57 the chain is Lumenal; the sequence is PDSYWNNKRNVLN. Residues 58–78 form a helical membrane-spanning segment; that stretch reads VYFVKFCWGWTLWLLLPFITL. At 79-93 the chain is on the cytoplasmic side; the sequence is TNYKLTGSITKVLRR. The helical transmembrane segment at 94–114 threads the bilayer; it reads LSSLLVGTLFWYLCTNLFLYI. Over 115–144 the chain is Lumenal; the sequence is EHITGSCYESEALLDSIEHQDRKECRLHGG. Residues 145–165 traverse the membrane as a helical segment; sequence FWHGFDISGHCFLLSYCILII. His-154 is an active-site residue. Topologically, residues 166–189 are cytoplasmic; the sequence is LEETSVIRSIQFERHWHRMAINAQ. 2 helical membrane-spanning segments follow: residues 190-210 and 211-231; these read FTAL…TAVY and FHNI…WYIT. Residue His-212 is part of the active site. At 232–260 the chain is on the cytoplasmic side; the sequence is YRWWYLQPISPGLPPASASHSEKEPVYKN.

This sequence belongs to the FIT family. FIT2 subfamily.

The protein localises to the endoplasmic reticulum membrane. The enzyme catalyses an acyl-CoA + H2O = an acyl-4'-phosphopantetheine + adenosine 3',5'-bisphosphate + 2 H(+). Its function is as follows. Fatty acyl-coenzyme A (CoA) diphosphatase that hydrolyzes fatty acyl-CoA to yield acyl-4'-phosphopantetheine and adenosine 3',5'-bisphosphate. Preferentially hydrolyzes unsaturated long-chain acyl-CoA substrates in the endoplasmic reticulum (ER) lumen. This catalytic activity is required for maintaining ER structure and for lipid droplets (LDs) biogenesis, which are lipid storage organelles involved in maintaining lipid and energy homeostasis. May directly bind to diacylglycerol (DAGs) and triacylglycerol, which is also important for LD biogenesis. May support directional budding of nacent LDs from the ER into the cytosol by reducing DAG levels at sites of LD formation. May play a role in the regulation of cell morphology, ER morphology and cytoskeletal organization. The polypeptide is Acyl-coenzyme A diphosphatase FITM2 (Xenopus laevis (African clawed frog)).